Reading from the N-terminus, the 272-residue chain is Phosphoglycolate phosphatase (272 aa).

The active-site Nucleophile is the D19. Mg(2+)-binding residues include D19, D21, and D182.

It belongs to the HAD-like hydrolase superfamily. CbbY/CbbZ/Gph/YieH family. Mg(2+) is required as a cofactor.

It catalyses the reaction 2-phosphoglycolate + H2O = glycolate + phosphate. It functions in the pathway organic acid metabolism; glycolate biosynthesis; glycolate from 2-phosphoglycolate: step 1/1. Specifically catalyzes the dephosphorylation of 2-phosphoglycolate. Is involved in the dissimilation of the intracellular 2-phosphoglycolate formed during the DNA repair of 3'-phosphoglycolate ends, a major class of DNA lesions induced by oxidative stress. In Pseudomonas fluorescens (strain ATCC BAA-477 / NRRL B-23932 / Pf-5), this protein is Phosphoglycolate phosphatase.